A 1180-amino-acid chain; its full sequence is MRKFTLSLMHAFLPAGGRNALPGKRGVSRALLGLSLGMALTPLAGAATSAQQQLLEQVRLGEATHREDLVRQSLYRLELIDPNDPQVIAARFRYLLRQGDSDGAQKLLDRLAQLAPESTAYQSSRTAMLLSTPQGRQSLQEARLLATTGHTEQAIASYDKLFKGYPPEGELAVEYWTTVAKLPARRHEAINQLQKINAVSPGNNALQNALAQLLFASGRRDEGFAVLKQMAKSSTGRSAASAIWYQQIKDLPVSDASVKALQDYLTQFSEGDSVSAARAQLSEQQKQLADPAFRARSQGIAAVNAGEGGKAIAQLQQAVSARQDDSEAVGALGQAYSQRGDRARAVAQFEKALAMAPHSSSRDKWESLLKVNRYWLLIQQGDAALKANNLAQAERFYQQARAVDNTDSYAVLGLGDVAMARKDNAAAERYYQQTLRMDSGNTNAVRGLANLYRQQSPQKAAAFIASLSASQRRSIDDIERSLENDRLAQQAETLESEGKWAQAAELHRRRLALDPGSVWVTYRLSRDLWQAGQHAQADAQMRSLAQQKPNDPEQVYAYGLYLSGSDRDRAALAHLNTLPTSQWNSNIQELAGRLQSNQVLESANRLRDSGKEREAEALLRQQPPSTRIALTLADWAQQRGDNAAARAAYDAVLAREPGNVDAMLGRVEIDIAQGDNAAARAQLAALPASQITSINMQRRVALAQLQLGDITAAARTFNRITPQAKAQPPSMESAMVLRDAAAFQAQTGEPQRALETYKDAMVAAAITPVRPQDNDTFTRLTRNDEKDDWLKRGVRSDAAELYRQQDLNVTLAHDYWGSSGTGGYSDLKAHTTMLQVDAPWSDGRAFFRTDMVNMDVGRFSTDADGKYDNNWGTCTLEKCSGHRSQADTGASVAVGWQNETWRWDIGTTPMGFNVVDVVGGVSYSDDIGPLGYTLNAHRRPISSSLLAFGGQKDASSNTGTKWGGVRANGGGVSLSYDKGEANGVWASLSGDQLSGKNVEDNWRVRWMTGYYYKVINENNRRVTVGLNNMIWHYDKDLSGYSLGQGGYYSPQEYLSFAVPVMWRQRTENWSWELGGSVSWSHSRNRTMPRYPLMNLIPADYQEDARDQTNGGGSSQGFGYTARALIERRVTANWFVGTAVDIQQAKDYTPSHLLLYVRYSAAGWQGDMDLPPQPLVPYADW.

Residues 1–45 (MRKFTLSLMHAFLPAGGRNALPGKRGVSRALLGLSLGMALTPLAG) form the signal peptide. TPR repeat units lie at residues 85 to 118 (PQVIAARFRYLLRQGDSDGAQKLLDRLAQLAPES), 135 to 168 (GRQSLQEARLLATTGHTEQAIASYDKLFKGYPPE), 292 to 325 (AFRARSQGIAAVNAGEGGKAIAQLQQAVSARQDD), 326 to 359 (SEAVGALGQAYSQRGDRARAVAQFEKALAMAPHS), 374 to 407 (YWLLIQQGDAALKANNLAQAERFYQQARAVDNTD), 408 to 441 (SYAVLGLGDVAMARKDNAAAERYYQQTLRMDSGN), 484 to 517 (NDRLAQQAETLESEGKWAQAAELHRRRLALDPGS), 626 to 659 (TRIALTLADWAQQRGDNAAARAAYDAVLAREPGN), 694 to 727 (INMQRRVALAQLQLGDITAAARTFNRITPQAKAQ), and 734 to 767 (AMVLRDAAAFQAQTGEPQRALETYKDAMVAAAIT).

Belongs to the AcsC/BcsC family.

Its pathway is glycan metabolism; bacterial cellulose biosynthesis. Required for maximal bacterial cellulose synthesis. This is Cellulose synthase operon protein C (bcsC) from Salmonella typhimurium (strain LT2 / SGSC1412 / ATCC 700720).